Here is a 445-residue protein sequence, read N- to C-terminus: Phosphatidate cytidylyltransferase 2 (445 aa).

Basic and acidic residues predominate over residues 1 to 39; it reads MTELRQRVAHEPVAPPEDKESESEAKVDGETASDSESRA. The tract at residues 1–49 is disordered; the sequence is MTELRQRVAHEPVAPPEDKESESEAKVDGETASDSESRAESAPLPVSAD. Ser21 carries the phosphoserine modification. A Phosphothreonine modification is found at Thr31. A phosphoserine mark is found at Ser33, Ser35, and Ser37. Phosphothreonine is present on Thr51. 6 helical membrane-spanning segments follow: residues 79-99, 132-152, 166-186, 213-233, 262-282, and 340-360; these read MIAF…IIVM, FLLC…FFTL, HRFI…LSLV, LVIH…SCVI, GFIG…YVMS, and IALS…ASGF.

This sequence belongs to the CDS family. As to quaternary structure, homodimer. Widely expressed. Expressed in heart, brain and retina, and to a lesser extent in placenta, lung, liver, skeletal muscle, kidney and pancreas.

It is found in the endoplasmic reticulum membrane. It catalyses the reaction a 1,2-diacyl-sn-glycero-3-phosphate + CTP + H(+) = a CDP-1,2-diacyl-sn-glycerol + diphosphate. It carries out the reaction 1-octadecanoyl-2-(5Z,8Z,11Z,14Z-eicosatetraenoyl)-sn-glycero-3-phosphate + CTP + H(+) = 1-octadecanoyl-2-(5Z,8Z,11Z,14Z-eicosatetraenoyl)-sn-glycero-3-cytidine-5'-diphosphate + diphosphate. The enzyme catalyses 1-octadecanoyl-2-(9Z,12Z-octadecadienoyl)-sn-glycero-3-phosphate + CTP + H(+) = 1-octadecanoyl-2-(9Z,12Z-octadecadienoyl)-sn-glycero-3-cytidine-5'-diphosphate + diphosphate. The catalysed reaction is 1-hexadecanoyl-2-(5Z,8Z,11Z,14Z-eicosatetraenoyl)-sn-glycero-3-phosphate + CTP + H(+) = 1-hexadecanoyl-2-(5Z,8Z,11Z,14Z-eicosatetraenoyl)-sn-glycero-3-cytidine-5'-diphosphate + diphosphate. It catalyses the reaction 1,2-di-(5Z,8Z,11Z,14Z)-eicosatetraenoyl-sn-glycero-3-phosphate + CTP + H(+) = 1,2-di-(5Z,8Z,11Z,14Z-eicosatetraenoyl)-sn-glycero-3-cytidine-5'-diphosphate + diphosphate. It carries out the reaction 1-octadecanoyl-2-(9Z-octadecenoyl)-sn-glycero-3-phosphate + CTP + H(+) = 1-octadecanoyl-2-(9Z-octadecenoyl)-sn-glycero-3-cytidine-5'-diphosphate + diphosphate. The enzyme catalyses 1-octadecanoyl-2-(4Z,7Z,10Z,13Z,16Z,19Z-docosahexaenoyl)-sn-glycero-3-phosphate + CTP + H(+) = 1-octadecanoyl-2-(4Z,7Z,10Z,13Z,16Z,19Z-docosahexaenoyl)-sn-glycero-3-cytidine-5'-diphosphate + diphosphate. The catalysed reaction is 1,2-di-(9Z,12Z-octadecadienoyl)-sn-glycero-3-phosphate + CTP + H(+) = 1,2-di-(9Z,12Z-octadecadienoyl)-sn-glycero-3-cytidine-5'-diphosphate + diphosphate. It catalyses the reaction 1,2-di-(9Z-octadecenoyl)-sn-glycero-3-phosphate + CTP + H(+) = 1,2-di-(9Z-octadecenoyl)-sn-glycero-3-cytidine-5'-diphosphate + diphosphate. The protein operates within phospholipid metabolism; CDP-diacylglycerol biosynthesis; CDP-diacylglycerol from sn-glycerol 3-phosphate: step 3/3. Its activity is regulated as follows. Inhibited by its anionic phospholipid end products, with phosphatidylinositol-(4,5)- bisphosphate (PIP2) showing the strongest inhibition. Inhibition is also acyl chain specific, with 1-stearoyl-2-arachidonoyl-snphosphatidylinositol showing the strongest inhibition. Catalyzes the conversion of phosphatidic acid (PA) to CDP-diacylglycerol (CDP-DAG), an essential intermediate in the synthesis of phosphatidylglycerol, cardiolipin and phosphatidylinositol. Exhibits specificity for the nature of the acyl chains at the sn-1 and sn-2 positions in the substrate, PA and the preferred acyl chain composition is 1-stearoyl-2-arachidonoyl-sn-phosphatidic acid. Plays an important role in regulating the growth and maturation of lipid droplets which are storage organelles at the center of lipid and energy homeostasis. This Homo sapiens (Human) protein is Phosphatidate cytidylyltransferase 2.